The following is a 232-amino-acid chain: Large ribosomal subunit protein uL1 (232 aa).

It belongs to the universal ribosomal protein uL1 family. In terms of assembly, part of the 50S ribosomal subunit.

Its function is as follows. Binds directly to 23S rRNA. The L1 stalk is quite mobile in the ribosome, and is involved in E site tRNA release. Protein L1 is also a translational repressor protein, it controls the translation of the L11 operon by binding to its mRNA. The chain is Large ribosomal subunit protein uL1 from Bacillus pumilus (strain SAFR-032).